The chain runs to 1340 residues: Early transcription factor large subunit homolog (1340 aa).

The protein belongs to the asfivirus G1340L family.

Its subcellular location is the virion. Putative initation factor. The polypeptide is Early transcription factor large subunit homolog (African swine fever virus (isolate Tick/South Africa/Pretoriuskop Pr4/1996) (ASFV)).